A 159-amino-acid chain; its full sequence is Transcription elongation factor GreA (159 aa).

Residues 47 to 73 (AEYDAAREEQSLTEAHIADLENKLSTA) adopt a coiled-coil conformation.

This sequence belongs to the GreA/GreB family.

Its function is as follows. Necessary for efficient RNA polymerase transcription elongation past template-encoded arresting sites. The arresting sites in DNA have the property of trapping a certain fraction of elongating RNA polymerases that pass through, resulting in locked ternary complexes. Cleavage of the nascent transcript by cleavage factors such as GreA or GreB allows the resumption of elongation from the new 3'terminus. GreA releases sequences of 2 to 3 nucleotides. This chain is Transcription elongation factor GreA, found in Chlorobium phaeobacteroides (strain DSM 266 / SMG 266 / 2430).